Reading from the N-terminus, the 205-residue chain is Imidazole glycerol phosphate synthase subunit HisH (205 aa).

Residues 1-205 (MITIVDYQMG…RFATAPVEVA (205 aa)) form the Glutamine amidotransferase type-1 domain. The Nucleophile role is filled by C79. Active-site residues include H182 and E184.

Heterodimer of HisH and HisF.

The protein localises to the cytoplasm. It catalyses the reaction 5-[(5-phospho-1-deoxy-D-ribulos-1-ylimino)methylamino]-1-(5-phospho-beta-D-ribosyl)imidazole-4-carboxamide + L-glutamine = D-erythro-1-(imidazol-4-yl)glycerol 3-phosphate + 5-amino-1-(5-phospho-beta-D-ribosyl)imidazole-4-carboxamide + L-glutamate + H(+). It carries out the reaction L-glutamine + H2O = L-glutamate + NH4(+). Its pathway is amino-acid biosynthesis; L-histidine biosynthesis; L-histidine from 5-phospho-alpha-D-ribose 1-diphosphate: step 5/9. Its function is as follows. IGPS catalyzes the conversion of PRFAR and glutamine to IGP, AICAR and glutamate. The HisH subunit catalyzes the hydrolysis of glutamine to glutamate and ammonia as part of the synthesis of IGP and AICAR. The resulting ammonia molecule is channeled to the active site of HisF. The polypeptide is Imidazole glycerol phosphate synthase subunit HisH (Rhodopirellula baltica (strain DSM 10527 / NCIMB 13988 / SH1)).